The sequence spans 88 residues: Small ribosomal subunit protein bS20 (88 aa).

The segment at 1–25 is disordered; the sequence is MANTAQALKRIRQTNKARAQNASQR. Residues 16–25 are compositionally biased toward polar residues; the sequence is KARAQNASQR.

This sequence belongs to the bacterial ribosomal protein bS20 family.

Its function is as follows. Binds directly to 16S ribosomal RNA. The polypeptide is Small ribosomal subunit protein bS20 (Dichelobacter nodosus (strain VCS1703A)).